The chain runs to 267 residues: MDEGGGAGAAAAAAGNAAGAAVHHNARSAEDVFRDFRARRAGIVKALTTDVEKFYRQCDPEKENLCLYGLPNETWDVTLPAEEVPPELPEPALGINFARDGMIEKDWLSLVAVHSDAWLLSVAFYFGARFGFDKEARRRLFTMINGLPTVYEVVTGIAKKQTKVSNGSSKSNKSNPKPSKQSNSNSKPAKPPQPKDEEDSGPEGAEDEDQAYMCGACGETYANGEFWICCDVCEKWFHGKCVRITPAKAEHIKQYKCPGCSSKRSRE.

Residues 162-207 (TKVSNGSSKSNKSNPKPSKQSNSNSKPAKPPQPKDEEDSGPEGAED) are disordered. The span at 165–188 (SNGSSKSNKSNPKPSKQSNSNSKP) shows a compositional bias: low complexity. Residues 196–207 (DEEDSGPEGAED) are compositionally biased toward acidic residues. Residues 211-263 (AYMCGACGETYANGEFWICCDVCEKWFHGKCVRITPAKAEHIKQYKCPGCSSK) form a PHD-type zinc finger.

It belongs to the Alfin family. As to quaternary structure, interacts with H3K4me3 and to a lesser extent with H3K4me2.

The protein resides in the nucleus. Its function is as follows. Histone-binding component that specifically recognizes H3 tails trimethylated on 'Lys-4' (H3K4me3), which mark transcription start sites of virtually all active genes. This chain is PHD finger protein ALFIN-LIKE 7, found in Oryza sativa subsp. indica (Rice).